We begin with the raw amino-acid sequence, 90 residues long: DNA-directed RNA polymerase subunit omega (90 aa).

This sequence belongs to the RNA polymerase subunit omega family. The RNAP catalytic core consists of 2 alpha, 1 beta, 1 beta' and 1 omega subunit. When a sigma factor is associated with the core the holoenzyme is formed, which can initiate transcription.

The catalysed reaction is RNA(n) + a ribonucleoside 5'-triphosphate = RNA(n+1) + diphosphate. Its function is as follows. Promotes RNA polymerase assembly. Latches the N- and C-terminal regions of the beta' subunit thereby facilitating its interaction with the beta and alpha subunits. This is DNA-directed RNA polymerase subunit omega from Histophilus somni (strain 129Pt) (Haemophilus somnus).